A 92-amino-acid polypeptide reads, in one-letter code: MLCSIYKSPKKEGTYLYIPKRDDFSQVPDTLKQMFGKPIFVMLVNLEQRQLAQVNVEKVKQSMQEQGFFLQLPPPPENLLEQHKERKARQTP.

Residues 1–84 form the YcgL domain; it reads MLCSIYKSPK…PPENLLEQHK (84 aa). The tract at residues 71–92 is disordered; it reads QLPPPPENLLEQHKERKARQTP.

This Vibrio cholerae serotype O1 (strain ATCC 39541 / Classical Ogawa 395 / O395) protein is YcgL domain-containing protein VC0395_A1544/VC395_2072.